The chain runs to 236 residues: 1-(5-phosphoribosyl)-5-[(5-phosphoribosylamino)methylideneamino] imidazole-4-carboxamide isomerase (236 aa).

Asp-8 serves as the catalytic Proton acceptor. The active-site Proton donor is Asp-129.

It belongs to the HisA/HisF family.

The protein resides in the cytoplasm. The enzyme catalyses 1-(5-phospho-beta-D-ribosyl)-5-[(5-phospho-beta-D-ribosylamino)methylideneamino]imidazole-4-carboxamide = 5-[(5-phospho-1-deoxy-D-ribulos-1-ylimino)methylamino]-1-(5-phospho-beta-D-ribosyl)imidazole-4-carboxamide. The protein operates within amino-acid biosynthesis; L-histidine biosynthesis; L-histidine from 5-phospho-alpha-D-ribose 1-diphosphate: step 4/9. The chain is 1-(5-phosphoribosyl)-5-[(5-phosphoribosylamino)methylideneamino] imidazole-4-carboxamide isomerase from Methanosphaerula palustris (strain ATCC BAA-1556 / DSM 19958 / E1-9c).